The chain runs to 184 residues: Nutrient stress-induced DNA-binding protein (184 aa).

It belongs to the Dps family. In terms of assembly, hexamer.

Involved in protection of chromosomal DNA from damage under nutrient-limited and oxidative stress conditions. Binds heme. This Nostoc sp. (strain PCC 7120 / SAG 25.82 / UTEX 2576) protein is Nutrient stress-induced DNA-binding protein (dpsA).